We begin with the raw amino-acid sequence, 689 residues long: DNA-directed RNA polymerase subunit beta' (689 aa).

The Zn(2+) site is built by cysteine 76, cysteine 78, cysteine 94, and cysteine 97. The Mg(2+) site is built by aspartate 496, aspartate 498, and aspartate 500.

It belongs to the RNA polymerase beta' chain family. RpoC1 subfamily. As to quaternary structure, in plastids the minimal PEP RNA polymerase catalytic core is composed of four subunits: alpha, beta, beta', and beta''. When a (nuclear-encoded) sigma factor is associated with the core the holoenzyme is formed, which can initiate transcription. Mg(2+) is required as a cofactor. Requires Zn(2+) as cofactor.

Its subcellular location is the plastid. It is found in the chloroplast. The catalysed reaction is RNA(n) + a ribonucleoside 5'-triphosphate = RNA(n+1) + diphosphate. Functionally, DNA-dependent RNA polymerase catalyzes the transcription of DNA into RNA using the four ribonucleoside triphosphates as substrates. The polypeptide is DNA-directed RNA polymerase subunit beta' (Illicium oligandrum (Star anise)).